Reading from the N-terminus, the 80-residue chain is Metallothionein-like protein 2B (80 aa).

The protein belongs to the metallothionein superfamily. Type 15 family. In terms of tissue distribution, highly expressed in stems. Expressed in leaves and rachis.

Its function is as follows. Metallothioneins have a high content of cysteine residues that bind various heavy metals. This Oryza sativa subsp. japonica (Rice) protein is Metallothionein-like protein 2B (MT2B).